The sequence spans 683 residues: Amino acid transporter heavy chain SLC3A1 (683 aa).

Residues 1-10 show a composition bias toward basic and acidic residues; the sequence is MNEDKDKRDS. Positions 1–50 are disordered; the sequence is MNEDKDKRDSIQMSMKGCRTNNGFVQNEDIQEQDPDSRDTPQSNAVSIPA. The Cytoplasmic portion of the chain corresponds to 1 to 86; it reads MNEDKDKRDS…ARYRVPREIL (86 aa). Position 10 is a phosphoserine (S10). A helical; Signal-anchor for type II membrane protein membrane pass occupies residues 87–107; it reads FWLTVVSVFLLIGATIAIIII. Residues 108–683 lie on the Extracellular side of the membrane; the sequence is SPKCLDWWQA…SVLDLLYSSC (576 aa). Residue N211 participates in Ca(2+) binding. N211, N238, and N258 each carry an N-linked (GlcNAc...) asparagine glycan. Residues C239 and C270 are joined by a disulfide bond. Positions 281, 315, 316, and 318 each coordinate Ca(2+). An N-linked (GlcNAc...) asparagine glycan is attached at N329. S383 carries the post-translational modification Phosphoserine. 3 N-linked (GlcNAc...) asparagine glycosylation sites follow: N510, N520, and N574. Disulfide bonds link C568–C664 and C671–C683.

Disulfide-linked heterodimer composed of the catalytic light subunit SLC7A9 and the heavy subunit SLC3A1. The heterodimer is the minimal functional unit. Assembles in non-covalently linked heterotetramers (dimers of heterodimers) and higher order oligomers; the oligomerization is mediated by SLC3A1 likely to prevent degradation in the endoplasmic reticulum and facilitate heteromer trafficking to the plasma membrane. Disulfide-linked heterodimer composed of the catalytic light subunit SLC7A13 and the heavy subunit SLC3A1. As to expression, predominantly expressed in kidney and intestine. In kidney localized to the apical membrane of the proximal tubules.

The protein resides in the cell membrane. It is found in the apical cell membrane. Acts as a chaperone that facilitates biogenesis and trafficking of functional transporter heteromers to the plasma membrane. Associates with SLC7A9 to form a functional transporter complex that mediates the electrogenic exchange between cationic amino acids and neutral amino acids, with a stoichiometry of 1:1. SLC7A9-SLC3A1 transporter has system b(0,+)-like activity with high affinity for extracellular cationic amino acids and L-cystine and lower affinity for intracellular neutral amino acids. Substrate exchange is driven by high concentration of intracellular neutral amino acids and the intracellular reduction of L-cystine to L-cysteine. SLC7A9-SLC3A1 acts as a major transporter for reabsorption of L-cystine and dibasic amino acids across the brush border membrane in early proximal tubules. Associates with SLC7A13 to form a functional complex that transports anionic and neutral amino acids via exchange or facilitated diffusion. SLC7A13-SLC3A1 may act as a major transporter for L-cystine in late proximal tubules, ensuring its reabsorption from the luminal fluid in exchange for cytosolic L-glutamate or L-aspartate. In Rattus norvegicus (Rat), this protein is Amino acid transporter heavy chain SLC3A1 (Slc3a1).